A 61-amino-acid chain; its full sequence is MEKLKSIKITLVKSLIGAKKRHRLIIQGMGLRKINRTVFLPDLPSTRGMINKTAYLLKVEE.

This sequence belongs to the universal ribosomal protein uL30 family. In terms of assembly, part of the 50S ribosomal subunit.

In Nitrosomonas eutropha (strain DSM 101675 / C91 / Nm57), this protein is Large ribosomal subunit protein uL30.